A 281-amino-acid chain; its full sequence is Beta-lactamase (281 aa).

A signal peptide spans Met1–Ala24. Ser63 acts as the Acyl-ester intermediate in catalysis. Lys225 to Gly227 contributes to the substrate binding site.

It belongs to the class-A beta-lactamase family.

It catalyses the reaction a beta-lactam + H2O = a substituted beta-amino acid. This Staphylococcus aureus protein is Beta-lactamase (blaZ).